Reading from the N-terminus, the 679-residue chain is Tripartite terminase subunit 1 (679 aa).

The C3H1-type zinc finger occupies 180–208 (CIYCLNEHMMLPNQGESLPSLMMCVNCKH).

It belongs to the herpesviridae TRM1 protein family. As to quaternary structure, associates with TRM2 and TRM3 to form the tripartite terminase complex. Interacts with portal protein.

It localises to the host nucleus. Component of the molecular motor that translocates viral genomic DNA in empty capsid during DNA packaging. Forms a tripartite terminase complex together with TRM2 and TRM3 in the host cytoplasm. Once the complex reaches the host nucleus, it interacts with the capsid portal vertex. This portal forms a ring in which genomic DNA is translocated into the capsid. TRM1 carries an endonuclease activity that plays an important role for the cleavage of concatemeric viral DNA into unit length genomes. This is Tripartite terminase subunit 1 from Saimiriine herpesvirus 2 (strain 11) (SaHV-2).